The following is a 351-amino-acid chain: Photosystem II D2 protein (351 aa).

A helical membrane pass occupies residues 39-59; the sequence is TAYLAIGGWLTGTTFVTSWYT. His-116 is a chlorophyll a binding site. Residues 123–139 form a helical membrane-spanning segment; it reads GFMLRQFEIARLVGIRP. Positions 128 and 141 each coordinate pheophytin a. A helical membrane pass occupies residues 151-164; the sequence is VFVSVFLMYPLGQS. His-196 contacts chlorophyll a. A helical transmembrane segment spans residues 206-226; sequence GALLCAIHGATVENTLFEDGE. A plastoquinone contacts are provided by His-213 and Phe-260. His-213 contributes to the Fe cation binding site. A Fe cation-binding site is contributed by His-267. The helical transmembrane segment at 277–293 threads the bilayer; it reads GLWTSSIGIIGLALNLR.

This sequence belongs to the reaction center PufL/M/PsbA/D family. As to quaternary structure, PSII is composed of 1 copy each of membrane proteins PsbA, PsbB, PsbC, PsbD, PsbE, PsbF, PsbH, PsbI, PsbJ, PsbK, PsbL, PsbM, PsbT, PsbX, PsbY, PsbZ, Psb30/Ycf12, peripheral proteins PsbO, CyanoQ (PsbQ), PsbU, PsbV and a large number of cofactors. It forms dimeric complexes. The cofactor is The D1/D2 heterodimer binds P680, chlorophylls that are the primary electron donor of PSII, and subsequent electron acceptors. It shares a non-heme iron and each subunit binds pheophytin, quinone, additional chlorophylls, carotenoids and lipids. There is also a Cl(-1) ion associated with D1 and D2, which is required for oxygen evolution. The PSII complex binds additional chlorophylls, carotenoids and specific lipids..

The protein resides in the cellular thylakoid membrane. The enzyme catalyses 2 a plastoquinone + 4 hnu + 2 H2O = 2 a plastoquinol + O2. In terms of biological role, photosystem II (PSII) is a light-driven water:plastoquinone oxidoreductase that uses light energy to abstract electrons from H(2)O, generating O(2) and a proton gradient subsequently used for ATP formation. It consists of a core antenna complex that captures photons, and an electron transfer chain that converts photonic excitation into a charge separation. The D1/D2 (PsbA/PsbD) reaction center heterodimer binds P680, the primary electron donor of PSII as well as several subsequent electron acceptors. D2 is needed for assembly of a stable PSII complex. This Synechococcus sp. (strain CC9605) protein is Photosystem II D2 protein.